A 254-amino-acid polypeptide reads, in one-letter code: 4-hydroxy-tetrahydrodipicolinate reductase (254 aa).

G7–I12 contributes to the NAD(+) binding site. NADP(+) is bound at residue R35. NAD(+) contacts are provided by residues G91–T93 and A115–M118. The Proton donor/acceptor role is filled by H147. Residue H148 coordinates (S)-2,3,4,5-tetrahydrodipicolinate. K151 functions as the Proton donor in the catalytic mechanism. G157 to T158 provides a ligand contact to (S)-2,3,4,5-tetrahydrodipicolinate.

The protein belongs to the DapB family.

The protein localises to the cytoplasm. The enzyme catalyses (S)-2,3,4,5-tetrahydrodipicolinate + NAD(+) + H2O = (2S,4S)-4-hydroxy-2,3,4,5-tetrahydrodipicolinate + NADH + H(+). It catalyses the reaction (S)-2,3,4,5-tetrahydrodipicolinate + NADP(+) + H2O = (2S,4S)-4-hydroxy-2,3,4,5-tetrahydrodipicolinate + NADPH + H(+). Its pathway is amino-acid biosynthesis; L-lysine biosynthesis via DAP pathway; (S)-tetrahydrodipicolinate from L-aspartate: step 4/4. Functionally, catalyzes the conversion of 4-hydroxy-tetrahydrodipicolinate (HTPA) to tetrahydrodipicolinate. The chain is 4-hydroxy-tetrahydrodipicolinate reductase from Helicobacter pylori (strain ATCC 700392 / 26695) (Campylobacter pylori).